The chain runs to 328 residues: Biotin synthase (328 aa).

The 230-residue stretch at 53–282 (FHGNRVDLCA…ATTIRYAGGR (230 aa)) folds into the Radical SAM core domain. Positions 71, 75, and 78 each coordinate [4Fe-4S] cluster. Positions 115, 147, 207, and 277 each coordinate [2Fe-2S] cluster.

The protein belongs to the radical SAM superfamily. Biotin synthase family. As to quaternary structure, homodimer. Requires [4Fe-4S] cluster as cofactor. [2Fe-2S] cluster is required as a cofactor.

The enzyme catalyses (4R,5S)-dethiobiotin + (sulfur carrier)-SH + 2 reduced [2Fe-2S]-[ferredoxin] + 2 S-adenosyl-L-methionine = (sulfur carrier)-H + biotin + 2 5'-deoxyadenosine + 2 L-methionine + 2 oxidized [2Fe-2S]-[ferredoxin]. The protein operates within cofactor biosynthesis; biotin biosynthesis; biotin from 7,8-diaminononanoate: step 2/2. Catalyzes the conversion of dethiobiotin (DTB) to biotin by the insertion of a sulfur atom into dethiobiotin via a radical-based mechanism. The protein is Biotin synthase of Desulforudis audaxviator (strain MP104C).